We begin with the raw amino-acid sequence, 631 residues long: Phosphomethylpyrimidine synthase (631 aa).

Residues Asn-239, Met-268, Tyr-297, His-333, 353-355 (SRG), 394-397 (DGLR), and Glu-433 contribute to the substrate site. A Zn(2+)-binding site is contributed by His-437. Residue Tyr-460 participates in substrate binding. His-501 contributes to the Zn(2+) binding site. [4Fe-4S] cluster is bound by residues Cys-581, Cys-584, and Cys-589.

The protein belongs to the ThiC family. In terms of assembly, homodimer. [4Fe-4S] cluster is required as a cofactor.

The catalysed reaction is 5-amino-1-(5-phospho-beta-D-ribosyl)imidazole + S-adenosyl-L-methionine = 4-amino-2-methyl-5-(phosphooxymethyl)pyrimidine + CO + 5'-deoxyadenosine + formate + L-methionine + 3 H(+). It functions in the pathway cofactor biosynthesis; thiamine diphosphate biosynthesis. In terms of biological role, catalyzes the synthesis of the hydroxymethylpyrimidine phosphate (HMP-P) moiety of thiamine from aminoimidazole ribotide (AIR) in a radical S-adenosyl-L-methionine (SAM)-dependent reaction. In Escherichia coli O6:H1 (strain CFT073 / ATCC 700928 / UPEC), this protein is Phosphomethylpyrimidine synthase.